Reading from the N-terminus, the 384-residue chain is MRLSVLLSLLPLALGAPAVEQRSEAAPLIEARGEMVANKYIVKFKEGSALSALDAAMEKISGKPDHVYKNVFSGFAATLDENMVRVLRAHPDVEYIEQDAVVTINAAQTNAPWGLARISSTSPGTSTYYYDESAGQGSCVYVIDTGIEASHPEFEGRAQMVKTYYYSSRDGNGHGTHCAGTVGSRTYGVAKKTQLFGVKVLDDNGSGQYSTIIAGMDFVASDKNNRNCPKGVVASLSLGGGYSSSVNSAAARLQSSGVMVAVAAGNNNADARNYSPASEPSVCTVGASDRYDRRSSFSNYGSVLDIFGPGTSILSTWIGGSTRSISGTSMATPHVAGLAAYLMTLGKTTAASACRYIADTANKGDLSNIPFGTVNLLAYNNYQA.

The N-terminal stretch at 1–15 is a signal peptide; it reads MRLSVLLSLLPLALG. A propeptide spanning residues 16 to 105 is cleaved from the precursor; it reads APAVEQRSEA…IEQDAVVTIN (90 aa). One can recognise an Inhibitor I9 domain in the interval 39-104; sequence KYIVKFKEGS…YIEQDAVVTI (66 aa). A Peptidase S8 domain is found at 112–384; it reads PWGLARISST…NLLAYNNYQA (273 aa). Thr121 provides a ligand contact to Ca(2+). A disulfide bridge connects residues Cys139 and Cys228. Active-site charge relay system residues include Asp144 and His174. Ca(2+) is bound by residues Pro280, Val282, and Asp305. Cys283 and Cys354 are oxidised to a cystine. The active-site Charge relay system is the Ser329. Asp365 provides a ligand contact to Ca(2+).

This sequence belongs to the peptidase S8 family. Requires Ca(2+) as cofactor.

It carries out the reaction Hydrolysis of keratin, and of other proteins with subtilisin-like specificity. Hydrolyzes peptide amides.. Its function is as follows. Hydrolyzes keratin at aromatic and hydrophobic residues. This Parengyodontium album (Tritirachium album) protein is Proteinase K (PROK).